A 760-amino-acid polypeptide reads, in one-letter code: Xaa-Pro dipeptidyl-peptidase (760 aa).

Active-site charge relay system residues include Ser349, Asp469, and His499.

The protein belongs to the peptidase S15 family. Homodimer.

It localises to the cytoplasm. It catalyses the reaction Hydrolyzes Xaa-Pro-|- bonds to release unblocked, N-terminal dipeptides from substrates including Ala-Pro-|-p-nitroanilide and (sequentially) Tyr-Pro-|-Phe-Pro-|-Gly-Pro-|-Ile.. Removes N-terminal dipeptides sequentially from polypeptides having unsubstituted N-termini provided that the penultimate residue is proline. This is Xaa-Pro dipeptidyl-peptidase from Streptococcus pyogenes serotype M49 (strain NZ131).